The sequence spans 218 residues: Claudin-5 (218 aa).

Over 1–7 (MGSAALE) the chain is Cytoplasmic. A helical membrane pass occupies residues 8–28 (ILGLVLCLVGWVGLILACGLP). Topologically, residues 29 to 81 (MWQVTAFLDHNIVTAQTTWKGLWMSCVVQSTGHMQCKVYESVLALSAEVQAAR) are extracellular. Residues 82 to 102 (ALTVGAVLLALVALFVTLTGA) form a helical membrane-spanning segment. At 103–123 (QCTTCVAPGPVKARVALTGGA) the chain is on the cytoplasmic side. A helical membrane pass occupies residues 124 to 144 (LYAVCGLLALVPLCWFANIVV). The Extracellular segment spans residues 145–160 (REFYDPTVPVSQKYEL). Residues 161–181 (GAALYIGWAASALLMCGGGLV) traverse the membrane as a helical segment. Residues 182–218 (CCGAWVCTGRPEFSFPVKYSAPRRPTANGDYDKKNYV) are Cytoplasmic-facing. The interval 217-218 (YV) is interactions with TJP1, TJP2 and TJP3.

Belongs to the claudin family. In terms of assembly, interacts with MPDZ. Directly interacts with TJP1/ZO-1, TJP2/ZO-2 and TJP3/ZO-3. In terms of tissue distribution, widely expressed with highest levels in the lung.

It localises to the cell junction. It is found in the tight junction. The protein localises to the cell membrane. Its function is as follows. Plays a major role in tight junction-specific obliteration of the intercellular space, through calcium-independent cell-adhesion activity. The sequence is that of Claudin-5 (Cldn5) from Mus musculus (Mouse).